The chain runs to 130 residues: Small ribosomal subunit protein uS9 (130 aa).

The protein belongs to the universal ribosomal protein uS9 family.

The polypeptide is Small ribosomal subunit protein uS9 (Paraburkholderia phymatum (strain DSM 17167 / CIP 108236 / LMG 21445 / STM815) (Burkholderia phymatum)).